The chain runs to 53 residues: uncharacterized protein (53 aa).

Residues 4 to 24 (FILLIVGFIYGAGGVLLYSVY) form a helical membrane-spanning segment.

It localises to the host membrane. This is an uncharacterized protein from Acidianus bottle-shaped virus (isolate Italy/Pozzuoli) (ABV).